Reading from the N-terminus, the 124-residue chain is Large ribosomal subunit protein bL12 (124 aa).

It belongs to the bacterial ribosomal protein bL12 family. Homodimer. Part of the ribosomal stalk of the 50S ribosomal subunit. Forms a multimeric L10(L12)X complex, where L10 forms an elongated spine to which 2 to 4 L12 dimers bind in a sequential fashion. Binds GTP-bound translation factors.

Forms part of the ribosomal stalk which helps the ribosome interact with GTP-bound translation factors. Is thus essential for accurate translation. The chain is Large ribosomal subunit protein bL12 from Bacteroides thetaiotaomicron (strain ATCC 29148 / DSM 2079 / JCM 5827 / CCUG 10774 / NCTC 10582 / VPI-5482 / E50).